The chain runs to 373 residues: Glutamate 5-kinase (373 aa).

An ATP-binding site is contributed by Lys15. Substrate-binding residues include Ser55, Asp142, and Asn154. Residues 174–175 (TD) and 216–222 (TGGMATK) contribute to the ATP site. The PUA domain occupies 281–359 (AGSIVVDAGA…SEIERILGFR (79 aa)).

It belongs to the glutamate 5-kinase family.

It is found in the cytoplasm. It carries out the reaction L-glutamate + ATP = L-glutamyl 5-phosphate + ADP. It functions in the pathway amino-acid biosynthesis; L-proline biosynthesis; L-glutamate 5-semialdehyde from L-glutamate: step 1/2. In terms of biological role, catalyzes the transfer of a phosphate group to glutamate to form L-glutamate 5-phosphate. The polypeptide is Glutamate 5-kinase (Geobacter sp. (strain M21)).